Here is a 367-residue protein sequence, read N- to C-terminus: 2-aminoethylphosphonate--pyruvate transaminase (367 aa).

N6-(pyridoxal phosphate)lysine is present on Lys-194.

The protein belongs to the class-V pyridoxal-phosphate-dependent aminotransferase family. PhnW subfamily. In terms of assembly, homodimer. The cofactor is pyridoxal 5'-phosphate.

The enzyme catalyses (2-aminoethyl)phosphonate + pyruvate = phosphonoacetaldehyde + L-alanine. Its function is as follows. Involved in phosphonate degradation. The polypeptide is 2-aminoethylphosphonate--pyruvate transaminase (Salmonella choleraesuis (strain SC-B67)).